A 381-amino-acid chain; its full sequence is Dual specificity protein phosphatase 6 (381 aa).

A Rhodanese domain is found at 30-148 (GNERLLLMDC…FQAEFALHCE (119 aa)). Positions 176-203 (SSSDIESDLDRDPNSATDSDGSPLSNSQ) are disordered. Polar residues predominate over residues 189–203 (NSATDSDGSPLSNSQ). Residues 206 to 349 (FPVEILPFLY…LLDFERTLGL (144 aa)) form the Tyrosine-protein phosphatase domain. Cys293 acts as the Phosphocysteine intermediate in catalysis.

This sequence belongs to the protein-tyrosine phosphatase family. Non-receptor class dual specificity subfamily. In terms of assembly, interacts with MAPK1/ERK2. Post-translationally, ubiquitinated by the SCF(FBXO31) complex, leading to its proteasomal degradation.

The protein localises to the cytoplasm. It carries out the reaction O-phospho-L-tyrosyl-[protein] + H2O = L-tyrosyl-[protein] + phosphate. The catalysed reaction is O-phospho-L-seryl-[protein] + H2O = L-seryl-[protein] + phosphate. It catalyses the reaction O-phospho-L-threonyl-[protein] + H2O = L-threonyl-[protein] + phosphate. In terms of biological role, dual specificity protein phosphatase, which mediates dephosphorylation and inactivation of MAP kinases. Has a specificity for the ERK family. Plays an important role in alleviating acute postoperative pain. Necessary for the normal dephosphorylation of the long-lasting phosphorylated forms of spinal MAPK1/3 and MAP kinase p38 induced by peripheral surgery, which drives the resolution of acute postoperative allodynia. Also important for dephosphorylation of MAPK1/3 in local wound tissue, which further contributes to resolution of acute pain. The protein is Dual specificity protein phosphatase 6 (Dusp6) of Mus musculus (Mouse).